The chain runs to 293 residues: Nucleotide-binding protein BA_5384/GBAA_5384/BAS5004 (293 aa).

G14–T21 contributes to the ATP binding site. D65–G68 lines the GTP pocket.

The protein belongs to the RapZ-like family.

Its function is as follows. Displays ATPase and GTPase activities. In Bacillus anthracis, this protein is Nucleotide-binding protein BA_5384/GBAA_5384/BAS5004.